Consider the following 414-residue polypeptide: Carboxynorspermidine synthase (414 aa).

The protein belongs to the saccharopine dehydrogenase family. Carboxynorspermidine synthase subfamily. Homodimer.

The catalysed reaction is carboxynorspermidine + NADP(+) + H2O = L-aspartate 4-semialdehyde + propane-1,3-diamine + NADPH + H(+). It carries out the reaction carboxyspermidine + NADP(+) + H2O = L-aspartate 4-semialdehyde + putrescine + NADPH + H(+). Its activity is regulated as follows. Activated by dithiothreitol and inhibited by SH-reactive compounds. Functionally, involved in norspermidine biosynthesis. Catalyzes the synthesis of carboxynorspermidine from L-aspartate 4-semialdehyde and 1,3-diaminopropane. Is also slightly active with putrescine as a substrate. The chain is Carboxynorspermidine synthase from Vibrio alginolyticus (strain ATCC 17749 / DSM 2171 / NBRC 15630 / NCIMB 1903 / NCTC 12160 / XII-53).